The sequence spans 300 residues: Putative heme-binding peroxidase (300 aa).

Residue H39 is the Proton acceptor of the active site. Disordered regions lie at residues 44-64 (YDKS…EAEG) and 116-135 (GRTD…LPDA). The segment covering 116–126 (GRTDFADDSRV) has biased composition (basic and acidic residues). H163 lines the heme b pocket. Residue W179 is the Tryptophan radical intermediate of the active site.

It belongs to the peroxidase family. Cytochrome c peroxidase subfamily. It depends on heme b as a cofactor.

Destroys radicals which are normally produced within the cells and which are toxic to biological systems. In Pyricularia oryzae (strain 70-15 / ATCC MYA-4617 / FGSC 8958) (Rice blast fungus), this protein is Putative heme-binding peroxidase.